Reading from the N-terminus, the 67-residue chain is Beta-defensin 123 (67 aa).

A signal peptide spans 1-20 (MKLLLLTLTVLLLLSQLTPG). Disulfide bonds link Cys25-Cys52, Cys32-Cys46, and Cys36-Cys53.

Belongs to the beta-defensin family.

It localises to the secreted. Functionally, has antibacterial activity. The chain is Beta-defensin 123 (DEFB123) from Pongo pygmaeus (Bornean orangutan).